The following is a 1159-amino-acid chain: RNA-directed RNA polymerase (1159 aa).

Residues 545-727 enclose the RdRp catalytic domain; that stretch reads LTYGVLAEDT…KALASYTGLE (183 aa).

Belongs to the reoviridae RNA-directed RNA polymerase family. Interacts with VP3 (Potential). Interacts with VP2 (Potential). Interacts with NSP5; this interaction is probably necessary for the formation of functional virus factories.

The protein localises to the virion. The enzyme catalyses RNA(n) + a ribonucleoside 5'-triphosphate = RNA(n+1) + diphosphate. Its function is as follows. RNA-directed RNA polymerase that is involved in both transcription and genome replication. Together with VP3 capping enzyme, forms an enzyme complex positioned near the channels situated at each of the five-fold vertices of the core. Following infection, the outermost layer of the virus is lost, leaving a double-layered particle (DLP) made up of the core and VP6 shell. VP1 then catalyzes the transcription of fully conservative plus-strand genomic RNAs that are extruded through the DLP's channels into the cytoplasm where they function as mRNAs for translation of viral proteins. One copy of each of the viral (+)RNAs is also recruited during core assembly, together with newly synthesized polymerase complexes and VP2. The polymerase of these novo-formed particles catalyzes the synthesis of complementary minus-strands leading to dsDNA formation. To do so, the polymerase specifically recognizes conserved 3' sequence(s) in plus-strand RNA templates. Once dsRNA synthesis is complete, the polymerase switches to the transcriptional mode, thus providing secondary transcription. The polypeptide is RNA-directed RNA polymerase (Homo sapiens (Human)).